A 692-amino-acid chain; its full sequence is Elongation factor G (692 aa).

One can recognise a tr-type G domain in the interval 8–282 (EKVRNIGIAA…AVVDYLPAPT (275 aa)). Residues 17–24 (AHIDAGKT), 81–85 (DTPGH), and 135–138 (NKMD) contribute to the GTP site.

This sequence belongs to the TRAFAC class translation factor GTPase superfamily. Classic translation factor GTPase family. EF-G/EF-2 subfamily.

It is found in the cytoplasm. Functionally, catalyzes the GTP-dependent ribosomal translocation step during translation elongation. During this step, the ribosome changes from the pre-translocational (PRE) to the post-translocational (POST) state as the newly formed A-site-bound peptidyl-tRNA and P-site-bound deacylated tRNA move to the P and E sites, respectively. Catalyzes the coordinated movement of the two tRNA molecules, the mRNA and conformational changes in the ribosome. The polypeptide is Elongation factor G (Trichormus variabilis (strain ATCC 29413 / PCC 7937) (Anabaena variabilis)).